Reading from the N-terminus, the 707-residue chain is DNA ligase (707 aa).

NAD(+) contacts are provided by residues 48-52, 97-98, and E134; these read DAEYD and SI. K136 acts as the N6-AMP-lysine intermediate in catalysis. Positions 157, 193, 320, and 344 each coordinate NAD(+). Positions 438, 441, 456, and 462 each coordinate Zn(2+). Residues 621–707 form the BRCT domain; the sequence is VAPKPLSGKT…DSPPDERIPA (87 aa).

It belongs to the NAD-dependent DNA ligase family. LigA subfamily. Mg(2+) is required as a cofactor. The cofactor is Mn(2+).

The catalysed reaction is NAD(+) + (deoxyribonucleotide)n-3'-hydroxyl + 5'-phospho-(deoxyribonucleotide)m = (deoxyribonucleotide)n+m + AMP + beta-nicotinamide D-nucleotide.. Functionally, DNA ligase that catalyzes the formation of phosphodiester linkages between 5'-phosphoryl and 3'-hydroxyl groups in double-stranded DNA using NAD as a coenzyme and as the energy source for the reaction. It is essential for DNA replication and repair of damaged DNA. The protein is DNA ligase of Polaromonas naphthalenivorans (strain CJ2).